Consider the following 100-residue polypeptide: NADH-quinone oxidoreductase subunit K 2 (100 aa).

A run of 3 helical transmembrane segments spans residues Leu4 to Ile24, Ile29 to Leu49, and Ile60 to Met80.

This sequence belongs to the complex I subunit 4L family. As to quaternary structure, NDH-1 is composed of 14 different subunits. Subunits NuoA, H, J, K, L, M, N constitute the membrane sector of the complex.

The protein resides in the cell inner membrane. The enzyme catalyses a quinone + NADH + 5 H(+)(in) = a quinol + NAD(+) + 4 H(+)(out). NDH-1 shuttles electrons from NADH, via FMN and iron-sulfur (Fe-S) centers, to quinones in the respiratory chain. The immediate electron acceptor for the enzyme in this species is believed to be ubiquinone. Couples the redox reaction to proton translocation (for every two electrons transferred, four hydrogen ions are translocated across the cytoplasmic membrane), and thus conserves the redox energy in a proton gradient. The protein is NADH-quinone oxidoreductase subunit K 2 of Geobacter metallireducens (strain ATCC 53774 / DSM 7210 / GS-15).